The primary structure comprises 407 residues: D-galactonate dehydratase family member Pjdr2_1176 (407 aa).

Position 208 (D208) interacts with Mg(2+). Position 210 (H210) interacts with D-arabinonate. 2 residues coordinate Mg(2+): E234 and E260. 3 residues coordinate D-arabinonate: E260, R281, and E337.

The protein belongs to the mandelate racemase/muconate lactonizing enzyme family. GalD subfamily.

Its function is as follows. Has no detectable activity with D-mannonate and with a panel of 70 other acid sugars (in vitro), in spite of the conservation of the residues that are expected to be important for catalytic activity and cofactor binding. May have evolved a divergent function. This is D-galactonate dehydratase family member Pjdr2_1176 from Paenibacillus sp. (strain JDR-2).